Reading from the N-terminus, the 475-residue chain is Ribulose bisphosphate carboxylase large chain (475 aa).

Positions 1–2 (MS) are excised as a propeptide. P3 is subject to N-acetylproline. K14 bears the N6,N6,N6-trimethyllysine mark. The substrate site is built by N123 and T173. The active-site Proton acceptor is the K175. K177 is a binding site for substrate. 3 residues coordinate Mg(2+): K201, D203, and E204. N6-carboxylysine is present on K201. H294 acts as the Proton acceptor in catalysis. Positions 295, 327, and 379 each coordinate substrate.

Belongs to the RuBisCO large chain family. Type I subfamily. As to quaternary structure, heterohexadecamer of 8 large chains and 8 small chains; disulfide-linked. The disulfide link is formed within the large subunit homodimers. The cofactor is Mg(2+). The disulfide bond which can form in the large chain dimeric partners within the hexadecamer appears to be associated with oxidative stress and protein turnover.

The protein resides in the plastid. Its subcellular location is the chloroplast. The enzyme catalyses 2 (2R)-3-phosphoglycerate + 2 H(+) = D-ribulose 1,5-bisphosphate + CO2 + H2O. It carries out the reaction D-ribulose 1,5-bisphosphate + O2 = 2-phosphoglycolate + (2R)-3-phosphoglycerate + 2 H(+). RuBisCO catalyzes two reactions: the carboxylation of D-ribulose 1,5-bisphosphate, the primary event in carbon dioxide fixation, as well as the oxidative fragmentation of the pentose substrate in the photorespiration process. Both reactions occur simultaneously and in competition at the same active site. The polypeptide is Ribulose bisphosphate carboxylase large chain (Staurastrum punctulatum (Green alga)).